We begin with the raw amino-acid sequence, 125 residues long: MKYQGKSTRKATGGRLRLNRSKRKFELGRDFTIPVIGAQKLKVLNVTGNGSKVRVLKSDVVNVTDPKTGKTQKVKMTTVTENPANKNYVRRNFLTKGTFVTTELGKARITNRPGQDGCINAVLVA.

Belongs to the eukaryotic ribosomal protein eS8 family. Part of the 30S ribosomal subunit.

This is Small ribosomal subunit protein eS8 from Methanocella arvoryzae (strain DSM 22066 / NBRC 105507 / MRE50).